A 443-amino-acid chain; its full sequence is Methyl-coenzyme M reductase II subunit beta (443 aa).

Tyr367 provides a ligand contact to coenzyme M. Gly369 is a binding site for coenzyme B.

It belongs to the methyl-coenzyme M reductase beta subunit family. MCR is a hexamer of two alpha, two beta, and two gamma chains, forming a dimer of heterotrimers. The cofactor is coenzyme F430.

The catalysed reaction is coenzyme B + methyl-coenzyme M = methane + coenzyme M-coenzyme B heterodisulfide. Its pathway is one-carbon metabolism; methyl-coenzyme M reduction; methane from methyl-coenzyme M: step 1/1. Its function is as follows. Component of the methyl-coenzyme M reductase (MCR) I that catalyzes the reductive cleavage of methyl-coenzyme M (CoM-S-CH3 or 2-(methylthio)ethanesulfonate) using coenzyme B (CoB or 7-mercaptoheptanoylthreonine phosphate) as reductant which results in the production of methane and the mixed heterodisulfide of CoB and CoM (CoM-S-S-CoB). This is the final step in methanogenesis. The chain is Methyl-coenzyme M reductase II subunit beta from Methanothermobacter marburgensis (strain ATCC BAA-927 / DSM 2133 / JCM 14651 / NBRC 100331 / OCM 82 / Marburg) (Methanobacterium thermoautotrophicum).